The primary structure comprises 879 residues: Band 4.1-like protein 1 (879 aa).

Residues Met1 to Glu64 form a disordered region. A compositionally biased stretch (low complexity) spans Glu17–Ala35. Thr30 bears the Phosphothreonine mark. The span at Ser38–Thr50 shows a compositional bias: basic and acidic residues. Ser75 carries the phosphoserine modification. Thr79 carries the post-translational modification Phosphothreonine. The FERM domain maps to Ala97–Ser378. The residue at position 343 (Tyr343) is a Phosphotyrosine. Phosphoserine occurs at positions 378, 430, 437, 461, and 466. Residues Ser428–Glu501 form a disordered region. The segment covering Glu444–Glu501 has biased composition (basic and acidic residues). A Phosphothreonine modification is found at Thr475. The segment at Lys483–Ser541 is spectrin--actin-binding. Position 510 is a phosphoserine (Ser510). Residues Leu514 to Leu538 are compositionally biased toward basic and acidic residues. 3 disordered regions span residues Leu514–Asp596, Phe633–Glu687, and Ser718–Pro742. Residues Ser540, Ser541, Ser544, and Ser546 each carry the phosphoserine modification. A Phosphothreonine modification is found at Thr550. A compositionally biased stretch (basic and acidic residues) spans Thr550–Glu577. Ser564 and Ser578 each carry phosphoserine. Position 580 is a phosphothreonine (Thr580). A phosphoserine mark is found at Glu583, Gln587, Ser639, Ser648, Ser650, Ser665, Ser666, Asp669, Ser671, Ser677, and Ser684. Basic and acidic residues predominate over residues Asp635–Ser650. Residue Thr685 is modified to Phosphothreonine. The span at Ser718–Val728 shows a compositional bias: polar residues. Phosphoserine is present on residues Ser721, Pro742, Ala766, Ser782, and Ser868. The segment at Cys744–Ser879 is C-terminal (CTD).

As to quaternary structure, interacts with AGAP2. As to expression, highest expression in brain, lower in heart and kidney. Within the brain, highest expression in cerebellum.

It localises to the cytoplasm. The protein resides in the cytoskeleton. Functionally, may function to confer stability and plasticity to neuronal membrane via multiple interactions, including the spectrin-actin-based cytoskeleton, integral membrane channels and membrane-associated guanylate kinases. The chain is Band 4.1-like protein 1 from Rattus norvegicus (Rat).